A 533-amino-acid chain; its full sequence is Multicopper oxidase CueO (533 aa).

A signal peptide (tat-type signal) is located at residues 1–28; the sequence is MHRRDFLKLTAALGAATSLPLWSRAALA. 3 Plastocyanin-like domains span residues 53–166, 221–290, and 416–532; these read QTGS…IDDS, PYPQ…DTRD, and AFNF…FTVS. Cu cation-binding residues include H102, H104, H142, and H144. H458, H461, H463, H514, C515, H516, and H520 together coordinate Cu cation.

Belongs to the multicopper oxidase family. As to quaternary structure, monomer. Requires Cu cation as cofactor. Post-translationally, predicted to be exported by the Tat system. The position of the signal peptide cleavage has not been experimentally proven.

It localises to the periplasm. It carries out the reaction 4 Cu(+) + O2 + 4 H(+) = 4 Cu(2+) + 2 H2O. In terms of biological role, multicopper oxidase involved in copper homeostasis and copper tolerance under aerobic conditions. Is responsible for the oxidation of Cu(+) to the less harmful Cu(2+) in the periplasm, thereby preventing Cu(+) from entering the cytoplasm. In Yersinia pestis, this protein is Multicopper oxidase CueO (cueO).